Consider the following 424-residue polypeptide: UDP-N-acetylglucosamine 1-carboxyvinyltransferase (424 aa).

Phosphoenolpyruvate is bound at residue 22–23 (KN). Arg98 is a binding site for UDP-N-acetyl-alpha-D-glucosamine. Cys122 acts as the Proton donor in catalysis. Position 122 is a 2-(S-cysteinyl)pyruvic acid O-phosphothioketal (Cys122). Residues 127–131 (RPVDQ), Asp312, and Ile334 contribute to the UDP-N-acetyl-alpha-D-glucosamine site.

Belongs to the EPSP synthase family. MurA subfamily.

The protein localises to the cytoplasm. The enzyme catalyses phosphoenolpyruvate + UDP-N-acetyl-alpha-D-glucosamine = UDP-N-acetyl-3-O-(1-carboxyvinyl)-alpha-D-glucosamine + phosphate. It participates in cell wall biogenesis; peptidoglycan biosynthesis. In terms of biological role, cell wall formation. Adds enolpyruvyl to UDP-N-acetylglucosamine. The sequence is that of UDP-N-acetylglucosamine 1-carboxyvinyltransferase from Xanthomonas euvesicatoria pv. vesicatoria (strain 85-10) (Xanthomonas campestris pv. vesicatoria).